The sequence spans 254 residues: 5-oxoprolinase subunit A (254 aa).

Belongs to the LamB/PxpA family. Forms a complex composed of PxpA, PxpB and PxpC.

It carries out the reaction 5-oxo-L-proline + ATP + 2 H2O = L-glutamate + ADP + phosphate + H(+). Catalyzes the cleavage of 5-oxoproline to form L-glutamate coupled to the hydrolysis of ATP to ADP and inorganic phosphate. This chain is 5-oxoprolinase subunit A, found in Burkholderia thailandensis (strain ATCC 700388 / DSM 13276 / CCUG 48851 / CIP 106301 / E264).